Consider the following 436-residue polypeptide: ATP-dependent RNA helicase SUB2 (436 aa).

The segment covering 1–16 (MSAEEDLIDYSDEELN) has biased composition (acidic residues). The disordered stretch occupies residues 1-33 (MSAEEDLIDYSDEELNTNETAAPAADSNGKKGE). Positions 52–80 (TGFRDFLLKPELLRAIGDCGFEHPSEVQQ) match the Q motif motif. One can recognise a Helicase ATP-binding domain in the interval 83-258 (IPQAMLGGDI…KKFMQNPTEH (176 aa)). 96–103 (AKSGLGKT) serves as a coordination point for ATP. Residues 205 to 208 (DECD) carry the DEAD box motif. The Helicase C-terminal domain maps to 270 to 431 (GLQQYFVALE…EFPKDGIDAS (162 aa)).

This sequence belongs to the DEAD box helicase family. DECD subfamily.

Its subcellular location is the nucleus. The catalysed reaction is ATP + H2O = ADP + phosphate + H(+). ATP-binding RNA helicase involved in transcription elongation and required for the export of mRNA out of the nucleus. SUB2 also plays a role in pre-mRNA splicing and spliceosome assembly. May be involved in rDNA and telomeric silencing, and maintenance of genome integrity. This is ATP-dependent RNA helicase SUB2 (SUB2) from Pyricularia oryzae (strain 70-15 / ATCC MYA-4617 / FGSC 8958) (Rice blast fungus).